The chain runs to 65 residues: Hainantoxin-X-3 (65 aa).

Positions 1 to 20 are cleaved as a signal peptide; it reads MNMKILVLVAVLCLVVSTHA. A propeptide spanning residues 21–37 is cleaved from the precursor; sequence ERHSKTDMEDSPMIQER. 2 disulfide bridges follow: Cys-46/Cys-59 and Cys-55/Cys-64.

It belongs to the neurotoxin 36 family. 02 subfamily. In terms of tissue distribution, expressed by the venom gland.

The protein localises to the secreted. Functionally, reversibly blocks N-type calcium channels (Cav2.2/CACNA1B) in rat dorsal root ganglion cells. Elicits no toxic symptoms in either vertebrates or invertebrates during a period of 48 hours post-injection, when it was assayed in vivo by direct injection into mice and cockroaches. The protein is Hainantoxin-X-3 of Cyriopagopus hainanus (Chinese bird spider).